We begin with the raw amino-acid sequence, 994 residues long: Glycine dehydrogenase (decarboxylating), mitochondrial (994 aa).

The N-terminal 21 residues, 1 to 21, are a transit peptide targeting the mitochondrion; that stretch reads MLKLLRNNGINKLKSNLIRNY. K742 is subject to N6-(pyridoxal phosphate)lysine.

It belongs to the GcvP family. As to quaternary structure, homodimer. The glycine cleavage system is composed of four proteins: P, T, L and H. Requires pyridoxal 5'-phosphate as cofactor.

The protein resides in the mitochondrion. The catalysed reaction is N(6)-[(R)-lipoyl]-L-lysyl-[glycine-cleavage complex H protein] + glycine + H(+) = N(6)-[(R)-S(8)-aminomethyldihydrolipoyl]-L-lysyl-[glycine-cleavage complex H protein] + CO2. Its function is as follows. The glycine cleavage system catalyzes the degradation of glycine. The P protein binds the alpha-amino group of glycine through its pyridoxal phosphate cofactor; CO(2) is released and the remaining methylamine moiety is then transferred to the lipoamide cofactor of the H protein. This Dictyostelium discoideum (Social amoeba) protein is Glycine dehydrogenase (decarboxylating), mitochondrial (gcvP).